A 1047-amino-acid chain; its full sequence is Ras GTPase-activating protein 1 (1047 aa).

Methionine 1 carries the post-translational modification N-acetylmethionine. The region spanning 181 to 272 is the SH2 1 domain; sequence WYHGKLDRTI…LKGEKLLYPV (92 aa). The SH3 domain occupies 279 to 341; the sequence is EDRRRVRAIL…VEDLVEEVGR (63 aa). An SH2 2 domain is found at 351-441; sequence WFHGKISKQE…VEGYYLKEPV (91 aa). One can recognise a PH domain in the interval 474 to 577; it reads NIVKKGYLLK…WMKGLQAFCN (104 aa). The 114-residue stretch at 577 to 690 folds into the C2 domain; it reads NLRKSSPGTS…QKGHATDEWF (114 aa). A Phosphotyrosine modification is found at tyrosine 615. The Ras-GAP domain occupies 764–974; that stretch reads KLESLLLCTL…HRMIMFLDEL (211 aa). Serine 831 carries the post-translational modification Phosphoserine.

As to quaternary structure, interacts with SQSTM1. Interacts with SPSB1; the interaction does not promote degradation. Interacts with CAV2 (tyrosine phosphorylated form). Directly interacts with NCK1. Interacts with PDGFRB (tyrosine phosphorylated). Interacts (via SH2 domain) with the 'Tyr-9' phosphorylated form of PDPK1. Interacts with tyrosine-phosphorylated EPHB4. Post-translationally, the N-terminus is blocked. Phosphorylated by SRC and LCK. The phosphorylation SRC inhibits its ability to stimulate the Ras-GTPase activity, whereas phosphorylation by LCK does not display any effect on stimulation activity. In terms of tissue distribution, in placental villi, detected only in the trophoblast layer (cytotrophoblast and syncytiotrophoblast). Not detected in stromal, endothelial or Hofbauer cells (at protein level).

It is found in the cytoplasm. In terms of biological role, inhibitory regulator of the Ras-cyclic AMP pathway. Stimulates the GTPase of normal but not oncogenic Ras p21; this stimulation may be further increased in the presence of NCK1. This chain is Ras GTPase-activating protein 1 (RASA1), found in Homo sapiens (Human).